We begin with the raw amino-acid sequence, 721 residues long: 1,4-alpha-glucan branching enzyme GlgB (721 aa).

Asp404 serves as the catalytic Nucleophile. Residue Glu457 is the Proton donor of the active site.

It belongs to the glycosyl hydrolase 13 family. GlgB subfamily. Monomer.

It catalyses the reaction Transfers a segment of a (1-&gt;4)-alpha-D-glucan chain to a primary hydroxy group in a similar glucan chain.. It participates in glycan biosynthesis; glycogen biosynthesis. Functionally, catalyzes the formation of the alpha-1,6-glucosidic linkages in glycogen by scission of a 1,4-alpha-linked oligosaccharide from growing alpha-1,4-glucan chains and the subsequent attachment of the oligosaccharide to the alpha-1,6 position. The chain is 1,4-alpha-glucan branching enzyme GlgB from Novosphingobium aromaticivorans (strain ATCC 700278 / DSM 12444 / CCUG 56034 / CIP 105152 / NBRC 16084 / F199).